A 227-amino-acid polypeptide reads, in one-letter code: Venom allergen 5.01 (227 aa).

An N-terminal signal peptide occupies residues 1-23; sequence MEIGGLVYLILIITIINLSFGET. Disulfide bonds link C27–C39, C31–C124, C49–C117, and C193–C210. The SCP domain maps to 68–212; it reads LKRHNDFRQN…WYTHYLVCNY (145 aa).

The protein belongs to the CRISP family. Venom allergen 5-like subfamily. In terms of tissue distribution, expressed by the venom gland.

The protein localises to the secreted. The chain is Venom allergen 5.01 from Dolichovespula maculata (Bald-faced hornet).